The following is a 184-amino-acid chain: UPF0149 protein PA14_69010 (184 aa).

This sequence belongs to the UPF0149 family.

This is UPF0149 protein PA14_69010 from Pseudomonas aeruginosa (strain UCBPP-PA14).